We begin with the raw amino-acid sequence, 650 residues long: tRNA-dihydrouridine(47) synthase [NAD(P)(+)]-like (650 aa).

2 disordered regions span residues 1–24 and 46–120; these read MAEG…GALE and EAKG…NYDK. The residue at position 2 (Ala-2) is an N-acetylalanine. 2 stretches are compositionally biased toward basic and acidic residues: residues 48–58 and 70–79; these read KGQEKTCRETE and PEAKRIRLED. The span at 101–113 shows a compositional bias: basic residues; sequence KRARGQNKGRPHV. C3H1-type zinc fingers lie at residues 118–148 and 156–186; these read YDKN…HDVG and ADLG…HLRP. Residues 235–284 form a disordered region; that stretch reads FSQGPTPAAAVPEGTAAEGAPRQENCGAQQVPAGPGTSTPPSSPVRTCGP. Residue Ser-236 is modified to Phosphoserine. Phosphothreonine is present on Thr-273. Ser-276 and Ser-277 each carry phosphoserine. Residues 311 to 313 and Gln-365 each bind FMN; that span reads PLT. Catalysis depends on Cys-396, which acts as the Proton donor. Lys-416 participates in a covalent cross-link: Glycyl lysine isopeptide (Lys-Gly) (interchain with G-Cter in SUMO2). Residues Lys-435, His-465, 497–499, and 520–521 each bind FMN; these read NGD and AR.

Belongs to the Dus family. Dus3 subfamily. Requires FMN as cofactor.

The catalysed reaction is 5,6-dihydrouridine(47) in tRNA + NAD(+) = uridine(47) in tRNA + NADH + H(+). It catalyses the reaction 5,6-dihydrouridine(47) in tRNA + NADP(+) = uridine(47) in tRNA + NADPH + H(+). The enzyme catalyses a 5,6-dihydrouridine in mRNA + NAD(+) = a uridine in mRNA + NADH + H(+). It carries out the reaction a 5,6-dihydrouridine in mRNA + NADP(+) = a uridine in mRNA + NADPH + H(+). Its function is as follows. Catalyzes the synthesis of dihydrouridine, a modified base, in various RNAs, such as tRNAs, mRNAs and some long non-coding RNAs (lncRNAs). Mainly modifies the uridine in position 47 (U47) in the D-loop of most cytoplasmic tRNAs. Also able to mediate the formation of dihydrouridine in some mRNAs, thereby regulating their translation. The protein is tRNA-dihydrouridine(47) synthase [NAD(P)(+)]-like of Homo sapiens (Human).